The primary structure comprises 170 residues: 4-hydroxyphenylacetate 3-monooxygenase reductase component (170 aa).

This sequence belongs to the non-flavoprotein flavin reductase family. HpaC subfamily. As to quaternary structure, homodimer. 4-HPA 3-monooxygenase consists of a reductase component HpaC and an oxygenase component HpaB.

It carries out the reaction a reduced flavin + NAD(+) = an oxidized flavin + NADH + 2 H(+). The protein operates within aromatic compound metabolism; 4-hydroxyphenylacetate degradation; pyruvate and succinate semialdehyde from 4-hydroxyphenylacetate: step 1/7. Catalyzes the reduction of free flavins (FMN, FAD and riboflavin) by NADH. Subsequently, the reduced flavins diffuse to the large HpaB component or to other electron acceptors such as cytochrome c and Fe(3+) ion. The chain is 4-hydroxyphenylacetate 3-monooxygenase reductase component (hpaC) from Salmonella dublin.